The sequence spans 862 residues: Axin-1 (862 aa).

The tract at residues 1 to 78 (MNIQEQGFPL…GYEPEGSASP (78 aa)) is disordered. The Tankyrase-binding motif motif lies at 20–29 (APRPPVPGEE). Residues S75 and S77 each carry the phosphoserine; by CK1 modification. In terms of domain architecture, RGS spans 88–211 (SLHSLLDDQD…LKSDIYLEYT (124 aa)). The tract at residues 209–338 (EYTRTGSESP…DADTLSLTDS (130 aa)) is interaction with TP53. Disordered regions lie at residues 215–289 (SESP…YSEG) and 316–344 (TSAN…DGIP). S217 is modified (phosphoserine; by CK1). The span at 242 to 258 (NEDEEWKCDQDMDEDDG) shows a compositional bias: acidic residues. A compositionally biased stretch (low complexity) spans 325–339 (SLSSDADTLSLTDSS). The tract at residues 348–433 (IRKQHRREMQ…DGDPSSGPPG (86 aa)) is interaction with GSK3B. The tract at residues 353-411 (RREMQESVQVNGRVPLPHIPRTYRVPKEVRVEPQKFAEELIHRLEAVQRTREAEEKLEE) is interaction with SIAH1 and SIAH2. A disordered region spans residues 413–441 (LKRVRMEEEGEDGDPSSGPPGPCHKLPPA). Positions 429-441 (SGPPGPCHKLPPA) are enriched in pro residues. An interaction with CTNNB1 region spans residues 434 to 502 (PCHKLPPAPA…SPDSGHVAKM (69 aa)). A Phosphoserine; by CK1 modification is found at S469. The segment at 480–500 (RTPGRQSPGPGHRSPDSGHVA) is disordered. At T481 the chain carries Phosphothreonine; by GSK3-beta. 3 positions are modified to phosphoserine: S486, S493, and S511. The interval 507–757 (GGAASGHGKH…PVLHVVPAVS (251 aa)) is interaction with RNF111. Basic residues predominate over residues 531-544 (HHRHVHHHVHHSTA). 2 disordered regions span residues 531-629 (HHRH…AEKN) and 641-679 (KEIS…GPQL). The segment covering 545-556 (RPKEQVEAEATR) has biased composition (basic and acidic residues). Residues 575 to 789 (SRGYSESVGA…CDSIVVAYYF (215 aa)) are interaction with PPP2CA. At S581 the chain carries Phosphoserine. Positions 677–752 (PQLRTSVQPS…RPACAPVLHV (76 aa)) are interaction with HIPK2. The region spanning 780–862 (CDSIVVAYYF…KIIGKVEKVD (83 aa)) is the DIX domain. Residues K857 and K860 each participate in a glycyl lysine isopeptide (Lys-Gly) (interchain with G-Cter in SUMO) cross-link.

As to quaternary structure, homodimer. Interacts with ZBED3; the interaction is direct, enhanced by protein kinase GSK3B and casein kinase CSNK1E activities and decreases GSK3B-induced beta-catenin serine and threonine phosphorylations. Component of the beta-catenin destruction complex, containing at least, CTNNB1, an axin and GSK3B, that regulates CTNNB1 protein levels through phosphorylation and ubiquitination. Interacts with CTNNB1 (via the armadillo repeats 2-7). Interacts with GSK3B; the interaction hyperphosphorylates CTNNB1 leading to its ubiquitination and destruction. Component of the AXIN1-HIPK2-TP53 complex. Interacts directly in the complex with TP53 and HIPK2. Interacts with DAXX; the interaction stimulates the interaction of DAXX with TP53, stimulates 'Ser-46' phosphorylation of TP53 and induces cell death on UV irradiation. Also binds APC, SMAD6, SMAD7 and RNF111. Interacts with DIXDC1; prevents interaction with MAP3K1. Interacts with MAP3K4. Interacts with ANKRD6 and AIDA. Interacts with MDFI; the interaction decreases AXIN1-mediated JUN N-terminal kinase (JNK) activation. Interacts with MDFIC; the interaction inhibits beta-cateninin-mediated signaling and AXIN1-mediated JUN N-terminal kinase (JNK) activation. Interacts with LRP5 (via its phosphorylated PPPSP motifs); the interaction is stimulated by WNT1 and GSK3B and activates beta-catenin signaling. Interacts (via the C-terminal) with PPP1CA; the interaction dephosphorylates AXIN1 and regulates interaction with GSK3B. Interacts with PPP2CA; the interaction dephosphorylates AXIN1. Interacts with MACF1. Found in a complex composed of MACF1, APC, AXIN1, CTNNB1 and GSK3B. Interacts with TNKS. Interacts with DAB2; the interaction is mutually exclusive with the AXIN1:PPP1CA interaction. Interacts with WDR26. Interacts with GID8. Interacts with SIAH1 and SIAH2; both probably catalyze AXIN1 ubiquitination and subsequent proteasome-mediated ubiquitin-dependent degradation. Interaction with GSK3B and AXIN1 is competitive. In terms of processing, phosphorylation and dephosphorylation of AXIN1 regulates assembly and function of the beta-catenin complex. Phosphorylated by CK1 and GSK3B. Dephosphorylated by PPP1CA and PPP2CA. Phosphorylation by CK1 enhances binding of GSK3B to AXIN1. ADP-ribosylated by tankyrase TNKS and TNKS2. Poly-ADP-ribosylated protein is recognized by RNF146, followed by ubiquitination at 'Lys-48' and subsequent activation of the Wnt signaling pathway. Post-translationally, ubiquitinated by RNF146 when poly-ADP-ribosylated, leading to its degradation and subsequent activation of the Wnt signaling pathway. Sumoylation at Lys-857 and Lys-860 prevents ubiquitination and degradation. Sumoylation is required for AXIN1-mediated JNK activation. Deubiquitinated by USP34, deubiquitinated downstream of beta-catenin stabilization step: deubiquitination is important for nuclear accumulation during Wnt signaling to positively regulate beta-catenin (CTNBB1)-mediated transcription. Ubiquitination by SIAH1 and SIAH2 induces its proteasomal degradation as part of the activation of the Wnt signaling pathway. As to expression, ubiquitously expressed.

Its subcellular location is the cytoplasm. The protein resides in the nucleus. The protein localises to the membrane. It localises to the cell membrane. Its function is as follows. Component of the beta-catenin destruction complex required for regulating CTNNB1 levels through phosphorylation and ubiquitination, and modulating Wnt-signaling. Controls dorsoventral patterning via two opposing effects; down-regulates CTNNB1 to inhibit the Wnt signaling pathway and ventralize embryos, but also dorsalizes embryos by activating a Wnt-independent JNK signaling pathway. In Wnt signaling, probably facilitates the phosphorylation of CTNNB1 and APC by GSK3B. Likely to function as a tumor suppressor. Enhances TGF-beta signaling by recruiting the RNF111 E3 ubiquitin ligase and promoting the degradation of inhibitory SMAD7. Also a component of the AXIN1-HIPK2-TP53 complex which controls cell growth, apoptosis and development. Facilitates the phosphorylation of TP53 by HIPK2 upon ultraviolet irradiation. In Homo sapiens (Human), this protein is Axin-1 (AXIN1).